The sequence spans 127 residues: Protein ApaG (127 aa).

The region spanning 3-127 (DDPRYRVEVE…FVLSVPRTLH (125 aa)) is the ApaG domain.

This Xanthomonas euvesicatoria pv. vesicatoria (strain 85-10) (Xanthomonas campestris pv. vesicatoria) protein is Protein ApaG.